Here is a 90-residue protein sequence, read N- to C-terminus: UPF0237 protein MK1213 (90 aa).

The ACT domain occupies 5-79 (VVTVIGADRP…EELGVDVIVQ (75 aa)).

Belongs to the UPF0237 family.

In Methanopyrus kandleri (strain AV19 / DSM 6324 / JCM 9639 / NBRC 100938), this protein is UPF0237 protein MK1213.